The following is a 476-amino-acid chain: MKIMFVAAEGAPFAKTGGLGDVIGALPKSLSKKGHDVAVVMPYYDMVDQKFGDQIENLMYFYTDVGWRHQYVGVKRLSQDNVTFYFIDNQYYFYRGHVYGDWDDGERFAYFQLAALELMEKIDFIPDVLHVHDYHTAMIPFLLKEKYHWIQAYNNIRAVFTIHNIEFQGQFGPEMLGDLFGVGAERYEDGTLRWNNCLNWMKAAILYSDRVTTVSPSYANEIKTPEFGKGLDQIMRMEAGKLSGIVNGIDSDLLNPETDAFLPYHFSKSNLEGKIKNKLALQENLGLPQDKNVPLIGIVSRLTDQKGFDIIASELDNMLQQDIQMVILGTGYHHFEETFSYFASRYPEKLSANITFDLRLAQQIYAASDIFMMPSAFEPCGLSQMMAMRYGSLPLVHEVGGLKDTVVAFNQFDGSGTGFSFNHFSGYWLMQTLKLALEVYNDYPEAWKKLQWQAMSKDFSWDTACVAYEQLYQQLQ.

Position 15 (Lys-15) interacts with ADP-alpha-D-glucose.

This sequence belongs to the glycosyltransferase 1 family. Bacterial/plant glycogen synthase subfamily.

It carries out the reaction [(1-&gt;4)-alpha-D-glucosyl](n) + ADP-alpha-D-glucose = [(1-&gt;4)-alpha-D-glucosyl](n+1) + ADP + H(+). The protein operates within glycan biosynthesis; glycogen biosynthesis. In terms of biological role, synthesizes alpha-1,4-glucan chains using ADP-glucose. This is Glycogen synthase from Streptococcus agalactiae serotype Ia (strain ATCC 27591 / A909 / CDC SS700).